We begin with the raw amino-acid sequence, 406 residues long: Imidazolonepropionase (406 aa).

Residues H72 and H74 each contribute to the Fe(3+) site. The Zn(2+) site is built by H72 and H74. 4-imidazolone-5-propanoate-binding residues include R81, Y144, and H177. Residue Y144 participates in N-formimidoyl-L-glutamate binding. H242 serves as a coordination point for Fe(3+). H242 provides a ligand contact to Zn(2+). A 4-imidazolone-5-propanoate-binding site is contributed by Q245. Residue D317 participates in Fe(3+) binding. Residue D317 coordinates Zn(2+). Residues N319 and G321 each contribute to the N-formimidoyl-L-glutamate site. T322 provides a ligand contact to 4-imidazolone-5-propanoate.

The protein belongs to the metallo-dependent hydrolases superfamily. HutI family. Requires Zn(2+) as cofactor. The cofactor is Fe(3+).

It is found in the cytoplasm. It carries out the reaction 4-imidazolone-5-propanoate + H2O = N-formimidoyl-L-glutamate. It participates in amino-acid degradation; L-histidine degradation into L-glutamate; N-formimidoyl-L-glutamate from L-histidine: step 3/3. In terms of biological role, catalyzes the hydrolytic cleavage of the carbon-nitrogen bond in imidazolone-5-propanoate to yield N-formimidoyl-L-glutamate. It is the third step in the universal histidine degradation pathway. This chain is Imidazolonepropionase, found in Yersinia pseudotuberculosis serotype O:1b (strain IP 31758).